Reading from the N-terminus, the 151-residue chain is Nucleoside diphosphate kinase (151 aa).

6 residues coordinate ATP: lysine 9, phenylalanine 57, arginine 86, threonine 92, arginine 103, and asparagine 113. Histidine 116 acts as the Pros-phosphohistidine intermediate in catalysis.

Belongs to the NDK family. Homotetramer. Mg(2+) serves as cofactor.

It is found in the cytoplasm. It catalyses the reaction a 2'-deoxyribonucleoside 5'-diphosphate + ATP = a 2'-deoxyribonucleoside 5'-triphosphate + ADP. The catalysed reaction is a ribonucleoside 5'-diphosphate + ATP = a ribonucleoside 5'-triphosphate + ADP. Major role in the synthesis of nucleoside triphosphates other than ATP. The ATP gamma phosphate is transferred to the NDP beta phosphate via a ping-pong mechanism, using a phosphorylated active-site intermediate. In Chloroflexus aggregans (strain MD-66 / DSM 9485), this protein is Nucleoside diphosphate kinase.